We begin with the raw amino-acid sequence, 732 residues long: MNDVQSQPLTLYIACPRGLEGLLADELADFGAEVTGTTVAGVHAQADTAMAYRICLWSRLANRVVLCLLREQGIERPEALVEAARRVDWGAHLRAGSSLAVDFHGQSEHIRHTRFGAQSVKDGIVDAMRAAGRERPAVDLKTPDARIYAHLHRGRLLLGLDLVGGSLHQRGYRRDAGHAPLKENLAAALLMRADWPARARRGEPLVDPLCGAGTLLIEAALMAADIAPQLSRDYFAFEAWVGHDPDAWRELQREAQARANVGRRRVKSKLYGRDQSPPAIAAAKANAMRAGIPALIDLQGAEVAQLTRPEGVDGPGLVITNPPYGERLGELPEVVPIYTALGERLRAEFEGWQLALFTGNPDLGHRTGLRAEKQYAFKNGPLDCKLLLIPVVAQRTERETSSEGDEPQGASGATSRPGPRNDGAQMFANRLEKNRKRLKKWLKQSGERCYRLYDADMPEYALAVDVYGDRVHVQEYAPPRSVDPRQAQRRLLDALEVIPQVLGVRPESVHYKQRTRQAGKAQYAKQDASGERFEVSEGPARLWVNLRDYLDTGLFLDHRPVRRRLREMADGKRFLNLFCYTGTATVQAALGGASDSVSVDLSNTYLAWARDNFALNRLDPSRHRVVRDDCLRWLETAGSEFDLIFMDPPTFSNSKKMDAVLDVQRDHARLIELAMARLAPGGTLVFSNNQRRFVLDAAVGERFAVEDISARTFDPDFSRRPDLHHCFLIRHR.

The region spanning M50 to L162 is the THUMP domain. The segment at T396–A424 is disordered.

This sequence belongs to the methyltransferase superfamily. RlmKL family.

It is found in the cytoplasm. The catalysed reaction is guanosine(2445) in 23S rRNA + S-adenosyl-L-methionine = N(2)-methylguanosine(2445) in 23S rRNA + S-adenosyl-L-homocysteine + H(+). The enzyme catalyses guanosine(2069) in 23S rRNA + S-adenosyl-L-methionine = N(2)-methylguanosine(2069) in 23S rRNA + S-adenosyl-L-homocysteine + H(+). Specifically methylates the guanine in position 2445 (m2G2445) and the guanine in position 2069 (m7G2069) of 23S rRNA. In Chromohalobacter salexigens (strain ATCC BAA-138 / DSM 3043 / CIP 106854 / NCIMB 13768 / 1H11), this protein is Ribosomal RNA large subunit methyltransferase K/L.